Here is a 330-residue protein sequence, read N- to C-terminus: Aspartate--ammonia ligase (330 aa).

The protein belongs to the class-II aminoacyl-tRNA synthetase family. AsnA subfamily.

It is found in the cytoplasm. It carries out the reaction L-aspartate + NH4(+) + ATP = L-asparagine + AMP + diphosphate + H(+). It participates in amino-acid biosynthesis; L-asparagine biosynthesis; L-asparagine from L-aspartate (ammonia route): step 1/1. The sequence is that of Aspartate--ammonia ligase from Haemophilus influenzae (strain 86-028NP).